A 721-amino-acid polypeptide reads, in one-letter code: Peptide-N(4)-(N-acetyl-beta-glucosaminyl)asparagine amidase (721 aa).

Residues cysteine 193, cysteine 196, cysteine 225, and cysteine 228 each coordinate Zn(2+). Cysteine 251 functions as the Nucleophile in the catalytic mechanism. Active-site residues include histidine 278 and aspartate 295.

Belongs to the transglutaminase-like superfamily. PNGase family. Zn(2+) is required as a cofactor.

Its subcellular location is the cytoplasm. The enzyme catalyses Hydrolysis of an N(4)-(acetyl-beta-D-glucosaminyl)asparagine residue in which the glucosamine residue may be further glycosylated, to yield a (substituted) N-acetyl-beta-D-glucosaminylamine and a peptide containing an aspartate residue.. Its function is as follows. Specifically deglycosylates the denatured form of N-linked glycoproteins in the cytoplasm and assists their proteasome-mediated degradation. Cleaves the beta-aspartyl-glucosamine (GlcNAc) of the glycan and the amide side chain of Asn, converting Asn to Asp. Prefers proteins containing high-mannose over those bearing complex type oligosaccharides. Can recognize misfolded proteins in the endoplasmic reticulum that are exported to the cytosol to be destroyed and deglycosylate them, while it has no activity toward native proteins. Deglycosylation is a prerequisite for subsequent proteasome-mediated degradation of some, but not all, misfolded glycoproteins. In Arabidopsis thaliana (Mouse-ear cress), this protein is Peptide-N(4)-(N-acetyl-beta-glucosaminyl)asparagine amidase (PNG1).